We begin with the raw amino-acid sequence, 70 residues long: DNA-directed RNA polymerase subunit epsilon (70 aa).

It belongs to the RNA polymerase subunit epsilon family. In terms of assembly, RNAP is composed of a core of 2 alpha, a beta and a beta' subunit. The core is associated with a delta subunit, and at least one of epsilon or omega. When a sigma factor is associated with the core the holoenzyme is formed, which can initiate transcription.

The enzyme catalyses RNA(n) + a ribonucleoside 5'-triphosphate = RNA(n+1) + diphosphate. Functionally, a non-essential component of RNA polymerase (RNAP). The chain is DNA-directed RNA polymerase subunit epsilon from Latilactobacillus sakei subsp. sakei (strain 23K) (Lactobacillus sakei subsp. sakei).